A 468-amino-acid polypeptide reads, in one-letter code: Glutamine synthetase (468 aa).

In terms of domain architecture, GS beta-grasp spans 13 to 97; that stretch reads NEVKFVDLRF…IRCDILEPAT (85 aa). Positions 105 to 468 constitute a GS catalytic domain; it reads PRSIAKRAED…PVEFELYYSV (364 aa). Mg(2+) is bound by residues Glu130 and Glu132. Glu208 contributes to the ATP binding site. 2 residues coordinate Mg(2+): Glu213 and Glu220. Residues 264–265 and Gly265 each bind L-glutamate; that span reads NG. His269 serves as a coordination point for Mg(2+). ATP is bound by residues 271–273 and Ser273; that span reads HQS. L-glutamate is bound by residues Arg321, Glu327, and Arg339. 3 residues coordinate ATP: Arg339, Arg344, and Lys352. Glu357 is a binding site for Mg(2+). Position 359 (Arg359) interacts with L-glutamate. Tyr397 carries the O-AMP-tyrosine modification.

It belongs to the glutamine synthetase family. In terms of assembly, oligomer of 12 subunits arranged in the form of two hexameric ring. It depends on Mg(2+) as a cofactor.

It is found in the cytoplasm. The catalysed reaction is L-glutamate + NH4(+) + ATP = L-glutamine + ADP + phosphate + H(+). The activity of this enzyme could be controlled by adenylation under conditions of abundant glutamine. In terms of biological role, catalyzes the ATP-dependent biosynthesis of glutamine from glutamate and ammonia. In Vibrio alginolyticus, this protein is Glutamine synthetase.